The sequence spans 675 residues: Zinc finger protein 526 (675 aa).

C2H2-type zinc fingers lie at residues 56 to 78 (FMCS…QEQH), 108 to 130 (FQCG…QDAH), and 140 to 163 (YQCG…KTQH). The segment at 160-195 (KTQHLSSAADEPPSPLPPPTPPPPPPPPPPPPPPEV) is disordered. The span at 171–194 (PPSPLPPPTPPPPPPPPPPPPPPE) shows a compositional bias: pro residues. The C2H2-type 4 zinc-finger motif lies at 200–222 (YECPECSTLCATPEEFLEHQGTH). Residues 225–234 (SLEKEEHNGL) are compositionally biased toward basic and acidic residues. The segment at 225 to 283 (SLEKEEHNGLEEEEEDEEEGEEEEDDDDEETDEEEASSELTADDTGSNKSTADSAQSCG) is disordered. Residues 235–261 (EEEEEDEEEGEEEEDDDDEETDEEEAS) are compositionally biased toward acidic residues. A compositionally biased stretch (polar residues) spans 269 to 281 (TGSNKSTADSAQS). 4 C2H2-type zinc fingers span residues 312-334 (FHCS…GRAH), 339-361 (HECT…QRLH), 367-389 (YLCV…RRAH), and 395-416 (HRCR…RRTH). The interval 415–439 (THTGKSGTPTRVATVSPAPAEPTPP) is disordered. The span at 418 to 427 (GKSGTPTRVA) shows a compositional bias: polar residues. C2H2-type zinc fingers lie at residues 447–470 (LPCP…RAVH), 477–499 (HRCG…LRTH), 505–527 (FQCH…QLTH), 533–555 (YQCL…RRLH), and 578–600 (YYCG…QRVH). The tract at residues 606-625 (LTLQPPRSPSPVPPPPPEPQ) is disordered. The span at 611 to 624 (PRSPSPVPPPPPEP) shows a compositional bias: pro residues.

Belongs to the krueppel C2H2-type zinc-finger protein family.

Its subcellular location is the nucleus. Its function is as follows. May be involved in transcriptional regulation. The sequence is that of Zinc finger protein 526 (Znf526) from Mus musculus (Mouse).